A 516-amino-acid polypeptide reads, in one-letter code: uncharacterized protein (516 aa).

This sequence to H.influenzae HI_0521.

This is an uncharacterized protein from Escherichia coli (strain K12).